The chain runs to 263 residues: Inner membrane protein YpjD (263 aa).

Over 1–3 (MPV) the chain is Periplasmic. The chain crosses the membrane as a helical span at residues 4–23 (FALLALVAYSVSLALIVPGL). At 24-34 (LQKNGGWRRMA) the chain is on the cytoplasmic side. A helical transmembrane segment spans residues 35-54 (IISAVIALVCHAIALEARIL). Topologically, residues 55–63 (PDGDSGQNL) are periplasmic. Residues 64–83 (SLLNVGSLVSLMICTVMTIV) traverse the membrane as a helical segment. Residues 84–89 (ASRNRG) are Cytoplasmic-facing. The chain crosses the membrane as a helical span at residues 90 to 109 (WLLLPIVYAFALINLALATF). Topologically, residues 110–123 (MPNEYITHLEATPG) are periplasmic. Residues 124–146 (MLVHIGLSLFSYATLIIAALYAL) traverse the membrane as a helical segment. Residues 147–181 (QLAWIDYQLKNKKLAFNQEMPPLMSIERKMFHITQ) are Cytoplasmic-facing. A helical membrane pass occupies residues 182–201 (IGVVLLTLTLCTGLFYMHNL). The Periplasmic portion of the chain corresponds to 202 to 210 (FSMENIDKA). The chain crosses the membrane as a helical span at residues 211-228 (VLSIVAWFVYIVLLWGHY). Over 229–236 (HEGWRGRR) the chain is Cytoplasmic. Residues 237-259 (VVWFNVAGAVILTLAYFGSRIVQ) traverse the membrane as a helical segment. Residues 260–263 (QLIS) lie on the Periplasmic side of the membrane.

The protein localises to the cell inner membrane. This Escherichia coli O157:H7 protein is Inner membrane protein YpjD (ypjD).